The chain runs to 930 residues: Serine/threonine-protein kinase ATG1 (930 aa).

A Protein kinase domain is found at Phe-23–Val-326. Residues Ile-29–Val-37 and Lys-52 each bind ATP. Catalysis depends on Asp-166, which acts as the Proton acceptor. Disordered regions lie at residues Asp-336–Glu-468, Gly-504–Pro-563, Ile-853–Glu-874, and Asn-904–Thr-930. Positions Asp-337–Arg-350 are enriched in basic and acidic residues. Positions Ser-377–Ser-393 are enriched in low complexity. Polar residues-rich tracts occupy residues Arg-400–Gly-417 and Gly-504–Ala-531. An ATG13-binding region spans residues Ala-629 to Gln-897.

Belongs to the protein kinase superfamily. Ser/Thr protein kinase family. APG1/unc-51/ULK1 subfamily. As to quaternary structure, homodimer. Dimerization requires the presence of ATG13. Forms a ternary complex with ATG13 and ATG17.

The protein localises to the cytoplasm. The protein resides in the preautophagosomal structure membrane. The enzyme catalyses L-seryl-[protein] + ATP = O-phospho-L-seryl-[protein] + ADP + H(+). It carries out the reaction L-threonyl-[protein] + ATP = O-phospho-L-threonyl-[protein] + ADP + H(+). In terms of biological role, serine/threonine protein kinase involved in the cytoplasm to vacuole transport (Cvt) and found to be essential in autophagy, where it is required for the formation of autophagosomes. Involved in the clearance of protein aggregates which cannot be efficiently cleared by the proteasome. Required for selective autophagic degradation of the nucleus (nucleophagy) as well as for mitophagy which contributes to regulate mitochondrial quantity and quality by eliminating the mitochondria to a basal level to fulfill cellular energy requirements and preventing excess ROS production. Also involved in endoplasmic reticulum-specific autophagic process, in selective removal of ER-associated degradation (ERAD) substrates. Plays a key role in ATG9 and ATG23 cycling through the pre-autophagosomal structure and is necessary to promote ATG18 binding to ATG9 through phosphorylation of ATG9. Catalyzes phosphorylation of ATG4, decreasing the interaction between ATG4 and ATG8 and impairing deconjugation of PE-conjugated forms of ATG8. Contributes to conidiation by regulating the conidial levels of the conidiation-related protein CP15 and mediates fungal oxidation resistance by controlling total superoxide dismutase (SOD) activity. This Beauveria bassiana (strain ARSEF 2860) (White muscardine disease fungus) protein is Serine/threonine-protein kinase ATG1.